A 106-amino-acid chain; its full sequence is Cyclin-dependent protein kinase inhibitor SMR15 (106 aa).

In terms of biological role, probable cyclin-dependent protein kinase (CDK) inhibitor that functions as a repressor of mitosis in the endoreduplication cell cycle. In Arabidopsis thaliana (Mouse-ear cress), this protein is Cyclin-dependent protein kinase inhibitor SMR15.